The primary structure comprises 130 residues: Small ribosomal subunit protein uS9 (130 aa).

Belongs to the universal ribosomal protein uS9 family.

The sequence is that of Small ribosomal subunit protein uS9 from Salmonella paratyphi A (strain AKU_12601).